A 431-amino-acid polypeptide reads, in one-letter code: Glutamate--tRNA ligase 2 (431 aa).

Residues 6–16 (PSPTGDMHIGN) carry the 'HIGH' region motif. Positions 235–239 (KMSKR) match the 'KMSKS' region motif. K238 is a binding site for ATP.

This sequence belongs to the class-I aminoacyl-tRNA synthetase family. Glutamate--tRNA ligase type 1 subfamily. In terms of assembly, monomer.

It localises to the cytoplasm. It catalyses the reaction tRNA(Glu) + L-glutamate + ATP = L-glutamyl-tRNA(Glu) + AMP + diphosphate. Its function is as follows. Catalyzes the attachment of glutamate to tRNA(Glu) in a two-step reaction: glutamate is first activated by ATP to form Glu-AMP and then transferred to the acceptor end of tRNA(Glu). This is Glutamate--tRNA ligase 2 from Campylobacter jejuni subsp. doylei (strain ATCC BAA-1458 / RM4099 / 269.97).